A 464-amino-acid chain; its full sequence is Na(+)/H(+) antiporter NhaA 1 (464 aa).

Transmembrane regions (helical) follow at residues 41–61 (GGLILMMAALIALALANSPLA), 85–105 (LHHWVNDGLMALFFFVVGLEL), 121–141 (VLPIVAAIGGMVIPAICYMSL), 150–170 (GWGIPMATDIAFALGVIALLA), 180–200 (FLVALAIVDDLGAVVVIAVFY), 207–227 (SFLIAGALLTCLLIFFNMIGI), 234–254 (FFVGLILWFVFLKSGVHATLA), 329–349 (VAFFILPVFAIFNAGVTIDFG), 363–383 (VVFGLLFGKFVGITGASWLAI), 399–419 (IIGASMLGSIGFTMSIFIAEL), and 428–448 (IIQAKLGILLSSLVAGVAGYL).

This sequence belongs to the NhaA Na(+)/H(+) (TC 2.A.33) antiporter family.

It is found in the cell inner membrane. It catalyses the reaction Na(+)(in) + 2 H(+)(out) = Na(+)(out) + 2 H(+)(in). Na(+)/H(+) antiporter that extrudes sodium in exchange for external protons. The polypeptide is Na(+)/H(+) antiporter NhaA 1 (Saccharophagus degradans (strain 2-40 / ATCC 43961 / DSM 17024)).